Reading from the N-terminus, the 151-residue chain is MKTLIVEDNPKKRASLVEYYSSEFPSDDLEVTSALISGLRVARDTKPEFIILDMTLPNYSPDENKGSRIELMPFAGREFVMRVNRMSIKTKVIIVSMFETFGVAPRLITLNSLDAELRDRYPNVFVEAVHYSQAQADWKTAIKNARLSLDR.

Residues 2-133 enclose the Response regulatory domain; that stretch reads KTLIVEDNPK…VFVEAVHYSQ (132 aa). D53 carries the 4-aspartylphosphate modification.

This is an uncharacterized protein from Sinorhizobium fredii (strain NBRC 101917 / NGR234).